Here is a 272-residue protein sequence, read N- to C-terminus: MTEQYQHKARKRFGQNFLHDAGVIDRILRSINAKAGDRMLEIGPGQGALTAGILNSGAQLDVVELDKDLIPILNQQFAGKSNFNLHQGDALKFDFNSLNAAPNSLRVVGNLPYNISTPLIFHLLNNAGIIRDMHFMLQKEVVERLAAGPGGGDWGRLSIMVQYHCRVEHLFNVGPGAFNPPPKVDSAIVRLVPHAVLPHPAKDHRLLERVVREAFNQRRKTLRNTLKQLLSNAEIEAAGVDGSLRPEQLDLAAFVRLADKLAEQPAKAPEAD.

S-adenosyl-L-methionine-binding residues include N16, L18, G43, E64, D89, and N110.

It belongs to the class I-like SAM-binding methyltransferase superfamily. rRNA adenine N(6)-methyltransferase family. RsmA subfamily.

Its subcellular location is the cytoplasm. The catalysed reaction is adenosine(1518)/adenosine(1519) in 16S rRNA + 4 S-adenosyl-L-methionine = N(6)-dimethyladenosine(1518)/N(6)-dimethyladenosine(1519) in 16S rRNA + 4 S-adenosyl-L-homocysteine + 4 H(+). Functionally, specifically dimethylates two adjacent adenosines (A1518 and A1519) in the loop of a conserved hairpin near the 3'-end of 16S rRNA in the 30S particle. May play a critical role in biogenesis of 30S subunits. This chain is Ribosomal RNA small subunit methyltransferase A, found in Pseudomonas fluorescens (strain Pf0-1).